The primary structure comprises 215 residues: Uridine kinase (215 aa).

16 to 23 (GASASGKS) contacts ATP.

This sequence belongs to the uridine kinase family.

The protein localises to the cytoplasm. It catalyses the reaction uridine + ATP = UMP + ADP + H(+). The enzyme catalyses cytidine + ATP = CMP + ADP + H(+). It functions in the pathway pyrimidine metabolism; CTP biosynthesis via salvage pathway; CTP from cytidine: step 1/3. Its pathway is pyrimidine metabolism; UMP biosynthesis via salvage pathway; UMP from uridine: step 1/1. The protein is Uridine kinase of Aliivibrio salmonicida (strain LFI1238) (Vibrio salmonicida (strain LFI1238)).